We begin with the raw amino-acid sequence, 329 residues long: Putative methylthioribose-1-phosphate isomerase (329 aa).

Residues 50-52 (RGA), R84, and Q182 contribute to the substrate site. The active-site Proton donor is the D223. 233–234 (NK) serves as a coordination point for substrate.

It belongs to the eIF-2B alpha/beta/delta subunits family. MtnA subfamily.

The enzyme catalyses 5-(methylsulfanyl)-alpha-D-ribose 1-phosphate = 5-(methylsulfanyl)-D-ribulose 1-phosphate. Catalyzes the interconversion of methylthioribose-1-phosphate (MTR-1-P) into methylthioribulose-1-phosphate (MTRu-1-P). The chain is Putative methylthioribose-1-phosphate isomerase from Methanocaldococcus jannaschii (strain ATCC 43067 / DSM 2661 / JAL-1 / JCM 10045 / NBRC 100440) (Methanococcus jannaschii).